The sequence spans 703 residues: Fatty acid oxidation complex subunit alpha (703 aa).

The segment at 1 to 190 is enoyl-CoA hydratase; sequence MSEQKAFSLN…KLGVVDACVP (190 aa). Residues 308–703 are 3-hydroxyacyl-CoA dehydrogenase; the sequence is AAVKKVGVLG…TRAGEGRTFY (396 aa).

The protein in the N-terminal section; belongs to the enoyl-CoA hydratase/isomerase family. In the central section; belongs to the 3-hydroxyacyl-CoA dehydrogenase family. Heterotetramer of two alpha chains (FadJ) and two beta chains (FadI).

It is found in the cytoplasm. The enzyme catalyses a (3S)-3-hydroxyacyl-CoA = a (2E)-enoyl-CoA + H2O. It catalyses the reaction a 4-saturated-(3S)-3-hydroxyacyl-CoA = a (3E)-enoyl-CoA + H2O. It carries out the reaction a (3S)-3-hydroxyacyl-CoA + NAD(+) = a 3-oxoacyl-CoA + NADH + H(+). The catalysed reaction is (3S)-3-hydroxybutanoyl-CoA = (3R)-3-hydroxybutanoyl-CoA. The protein operates within lipid metabolism; fatty acid beta-oxidation. Its function is as follows. Catalyzes the formation of a hydroxyacyl-CoA by addition of water on enoyl-CoA. Also exhibits 3-hydroxyacyl-CoA epimerase and 3-hydroxyacyl-CoA dehydrogenase activities. This chain is Fatty acid oxidation complex subunit alpha, found in Vibrio parahaemolyticus serotype O3:K6 (strain RIMD 2210633).